A 252-amino-acid polypeptide reads, in one-letter code: 3-dehydroquinate dehydratase (252 aa).

Residues 46–48 (EWR) and Arg82 each bind 3-dehydroquinate. His143 functions as the Proton donor/acceptor in the catalytic mechanism. The active-site Schiff-base intermediate with substrate is Lys170. Arg212, Ser231, and Gln235 together coordinate 3-dehydroquinate.

This sequence belongs to the type-I 3-dehydroquinase family. In terms of assembly, homodimer.

The enzyme catalyses 3-dehydroquinate = 3-dehydroshikimate + H2O. Its pathway is metabolic intermediate biosynthesis; chorismate biosynthesis; chorismate from D-erythrose 4-phosphate and phosphoenolpyruvate: step 3/7. In terms of biological role, involved in the third step of the chorismate pathway, which leads to the biosynthesis of aromatic amino acids. Catalyzes the cis-dehydration of 3-dehydroquinate (DHQ) and introduces the first double bond of the aromatic ring to yield 3-dehydroshikimate. The sequence is that of 3-dehydroquinate dehydratase from Listeria monocytogenes serotype 4a (strain HCC23).